A 146-amino-acid chain; its full sequence is Snaclec 1 (146 aa).

Positions 1 to 23 are cleaved as a signal peptide; it reads MGRFIFISFGLLVVFLSLSGTEA. 3 disulfide bridges follow: Cys25–Cys36, Cys53–Cys142, and Cys119–Cys134. The C-type lectin domain maps to 32 to 143; it reads YEGHCYRVFD…CRNYGHFVCK (112 aa).

This sequence belongs to the snaclec family. Heterodimer; disulfide-linked. Expressed by the venom gland.

It localises to the secreted. Interferes with one step of hemostasis (modulation of platelet aggregation, or coagulation cascade, for example). This chain is Snaclec 1, found in Bitis arietans (African puff adder).